Here is a 268-residue protein sequence, read N- to C-terminus: ELL-associated factor 1 (268 aa).

The interval I106–D268 is disordered. Residues T128–G154 are compositionally biased toward pro residues. S165 bears the Phosphoserine mark. Basic and acidic residues predominate over residues D171–V181. The necessary for transactivation activity stretch occupies residues D182–S262. Residues S188–G213 show a composition bias toward low complexity. Residues N238–D268 show a composition bias toward polar residues.

The protein belongs to the EAF family. In terms of assembly, component of the super elongation complex (SEC), at least composed of EAF1, EAF2, CDK9, MLLT3/AF9, AFF (AFF1 or AFF4), the P-TEFb complex and ELL (ELL, ELL2 or ELL3). Interacts with ELL and ELL2. Strongly expressed in heart, brain, placenta, lung, liver, skeletal muscle, kidney, pancreas, spleen, prostate, testis, small intestine and colon. Poorly expressed in thymus.

It localises to the nucleus speckle. It is found in the nucleus. Its subcellular location is the cajal body. Acts as a transcriptional transactivator of ELL and ELL2 elongation activities. This is ELL-associated factor 1 (EAF1) from Homo sapiens (Human).